We begin with the raw amino-acid sequence, 34 residues long: uncharacterized protein (34 aa).

This is an uncharacterized protein from Saccharomyces cerevisiae (strain ATCC 204508 / S288c) (Baker's yeast).